A 356-amino-acid polypeptide reads, in one-letter code: UDP-N-acetylglucosamine--N-acetylmuramyl-(pentapeptide) pyrophosphoryl-undecaprenol N-acetylglucosamine transferase (356 aa).

UDP-N-acetyl-alpha-D-glucosamine is bound by residues 15 to 17 (TGG), asparagine 127, arginine 163, serine 191, isoleucine 244, 263 to 268 (ALTVSE), and glutamine 288.

This sequence belongs to the glycosyltransferase 28 family. MurG subfamily.

The protein resides in the cell inner membrane. The enzyme catalyses di-trans,octa-cis-undecaprenyl diphospho-N-acetyl-alpha-D-muramoyl-L-alanyl-D-glutamyl-meso-2,6-diaminopimeloyl-D-alanyl-D-alanine + UDP-N-acetyl-alpha-D-glucosamine = di-trans,octa-cis-undecaprenyl diphospho-[N-acetyl-alpha-D-glucosaminyl-(1-&gt;4)]-N-acetyl-alpha-D-muramoyl-L-alanyl-D-glutamyl-meso-2,6-diaminopimeloyl-D-alanyl-D-alanine + UDP + H(+). Its pathway is cell wall biogenesis; peptidoglycan biosynthesis. Cell wall formation. Catalyzes the transfer of a GlcNAc subunit on undecaprenyl-pyrophosphoryl-MurNAc-pentapeptide (lipid intermediate I) to form undecaprenyl-pyrophosphoryl-MurNAc-(pentapeptide)GlcNAc (lipid intermediate II). In Yersinia pestis (strain Pestoides F), this protein is UDP-N-acetylglucosamine--N-acetylmuramyl-(pentapeptide) pyrophosphoryl-undecaprenol N-acetylglucosamine transferase.